The sequence spans 301 residues: Lipoyl synthase (301 aa).

Residues C53, C58, C64, C79, C83, C86, and S290 each coordinate [4Fe-4S] cluster. The Radical SAM core domain maps to 65 to 279 (WSRKTATYML…RIYGKSIGFK (215 aa)).

The protein belongs to the radical SAM superfamily. Lipoyl synthase family. [4Fe-4S] cluster serves as cofactor.

The protein localises to the cytoplasm. It catalyses the reaction [[Fe-S] cluster scaffold protein carrying a second [4Fe-4S](2+) cluster] + N(6)-octanoyl-L-lysyl-[protein] + 2 oxidized [2Fe-2S]-[ferredoxin] + 2 S-adenosyl-L-methionine + 4 H(+) = [[Fe-S] cluster scaffold protein] + N(6)-[(R)-dihydrolipoyl]-L-lysyl-[protein] + 4 Fe(3+) + 2 hydrogen sulfide + 2 5'-deoxyadenosine + 2 L-methionine + 2 reduced [2Fe-2S]-[ferredoxin]. Its pathway is protein modification; protein lipoylation via endogenous pathway; protein N(6)-(lipoyl)lysine from octanoyl-[acyl-carrier-protein]: step 2/2. Its function is as follows. Catalyzes the radical-mediated insertion of two sulfur atoms into the C-6 and C-8 positions of the octanoyl moiety bound to the lipoyl domains of lipoate-dependent enzymes, thereby converting the octanoylated domains into lipoylated derivatives. In Leptospira interrogans serogroup Icterohaemorrhagiae serovar copenhageni (strain Fiocruz L1-130), this protein is Lipoyl synthase.